A 349-amino-acid polypeptide reads, in one-letter code: Protein RecA (349 aa).

65 to 72 (GPESSGKT) contributes to the ATP binding site.

It belongs to the RecA family.

The protein localises to the cytoplasm. In terms of biological role, can catalyze the hydrolysis of ATP in the presence of single-stranded DNA, the ATP-dependent uptake of single-stranded DNA by duplex DNA, and the ATP-dependent hybridization of homologous single-stranded DNAs. It interacts with LexA causing its activation and leading to its autocatalytic cleavage. In Enterococcus faecium (Streptococcus faecium), this protein is Protein RecA.